The primary structure comprises 550 residues: Arginine--tRNA ligase (550 aa).

A 'HIGH' region motif is present at residues 130–140; it reads ANPTGPIHLGG.

The protein belongs to the class-I aminoacyl-tRNA synthetase family. As to quaternary structure, monomer.

The protein localises to the cytoplasm. It carries out the reaction tRNA(Arg) + L-arginine + ATP = L-arginyl-tRNA(Arg) + AMP + diphosphate. This chain is Arginine--tRNA ligase (argS), found in Corynebacterium glutamicum (strain ATCC 13032 / DSM 20300 / JCM 1318 / BCRC 11384 / CCUG 27702 / LMG 3730 / NBRC 12168 / NCIMB 10025 / NRRL B-2784 / 534).